The sequence spans 418 residues: AA11 family lytic polysaccharide monooxygenase B (418 aa).

Residues 1–21 form the signal peptide; it reads MMFSKSGLVAVAMLGASAVEA. Cu(+) is bound by residues H22 and H82. Cystine bridges form between C50–C165, C87–C113, and C206–C240. N-linked (GlcNAc...) asparagine glycans are attached at residues N120 and N134. A disordered region spans residues 226–345; sequence DGNPSNLQPA…SSSSSNGALT (120 aa). Over residues 254 to 345 the composition is skewed to low complexity; the sequence is SPSTPSTSSS…SSSSSNGALT (92 aa).

It belongs to the polysaccharide monooxygenase AA11 family. Cu(2+) is required as a cofactor.

It localises to the secreted. Lytic polysaccharide monooxygenase (LPMO)-like protein that acts as a strict peroxygenase and does not catalyze a monooxygenase reaction. It is indeed hardly active on chitin, while being very active on soluble oligomers of N-acetylglucosamine. Cleaves the glycosidic bonds byoxidizing the C1 position. Also unable to oxidize cellopentaose. Probably breaks glycosidic bonds in non-polymeric substrates possibly carbohydrates in the cell wall of the fungus or its competitors. In the presence of chitotetraose, the enzyme can withstand considerable amounts of H(2)O(2), which it uses to efficiently and stoichiometrically convert this substrate. The chain is AA11 family lytic polysaccharide monooxygenase B from Aspergillus fumigatus (strain ATCC MYA-4609 / CBS 101355 / FGSC A1100 / Af293) (Neosartorya fumigata).